The primary structure comprises 324 residues: 4-diphosphocytidyl-2-C-methyl-D-erythritol kinase (324 aa).

Lysine 11 is an active-site residue. 108 to 118 contributes to the ATP binding site; that stretch reads PIGAGLAGGST. Aspartate 150 is a catalytic residue.

This sequence belongs to the GHMP kinase family. IspE subfamily.

The catalysed reaction is 4-CDP-2-C-methyl-D-erythritol + ATP = 4-CDP-2-C-methyl-D-erythritol 2-phosphate + ADP + H(+). It participates in isoprenoid biosynthesis; isopentenyl diphosphate biosynthesis via DXP pathway; isopentenyl diphosphate from 1-deoxy-D-xylulose 5-phosphate: step 3/6. Catalyzes the phosphorylation of the position 2 hydroxy group of 4-diphosphocytidyl-2C-methyl-D-erythritol. This Cyanothece sp. (strain PCC 7425 / ATCC 29141) protein is 4-diphosphocytidyl-2-C-methyl-D-erythritol kinase.